The chain runs to 161 residues: 2-C-methyl-D-erythritol 2,4-cyclodiphosphate synthase (161 aa).

The a divalent metal cation site is built by aspartate 9 and histidine 11. 4-CDP-2-C-methyl-D-erythritol 2-phosphate is bound by residues 9-11 (DFH) and 37-38 (HS). Residue histidine 45 coordinates a divalent metal cation. Residues 59 to 61 (DIG), 64 to 68 (FPDTD), 135 to 138 (TTTE), and arginine 145 contribute to the 4-CDP-2-C-methyl-D-erythritol 2-phosphate site.

It belongs to the IspF family. Homotrimer. A divalent metal cation serves as cofactor.

The catalysed reaction is 4-CDP-2-C-methyl-D-erythritol 2-phosphate = 2-C-methyl-D-erythritol 2,4-cyclic diphosphate + CMP. The protein operates within isoprenoid biosynthesis; isopentenyl diphosphate biosynthesis via DXP pathway; isopentenyl diphosphate from 1-deoxy-D-xylulose 5-phosphate: step 4/6. Its function is as follows. Involved in the biosynthesis of isopentenyl diphosphate (IPP) and dimethylallyl diphosphate (DMAPP), two major building blocks of isoprenoid compounds. Catalyzes the conversion of 4-diphosphocytidyl-2-C-methyl-D-erythritol 2-phosphate (CDP-ME2P) to 2-C-methyl-D-erythritol 2,4-cyclodiphosphate (ME-CPP) with a corresponding release of cytidine 5-monophosphate (CMP). The chain is 2-C-methyl-D-erythritol 2,4-cyclodiphosphate synthase from Leptospira borgpetersenii serovar Hardjo-bovis (strain JB197).